A 310-amino-acid polypeptide reads, in one-letter code: Aspartate carbamoyltransferase catalytic subunit (310 aa).

Carbamoyl phosphate is bound by residues arginine 57 and threonine 58. Position 86 (lysine 86) interacts with L-aspartate. Positions 107, 135, and 138 each coordinate carbamoyl phosphate. L-aspartate is bound by residues arginine 168 and arginine 229. Leucine 268 and proline 269 together coordinate carbamoyl phosphate.

Belongs to the aspartate/ornithine carbamoyltransferase superfamily. ATCase family. As to quaternary structure, heterooligomer of catalytic and regulatory chains.

The enzyme catalyses carbamoyl phosphate + L-aspartate = N-carbamoyl-L-aspartate + phosphate + H(+). It functions in the pathway pyrimidine metabolism; UMP biosynthesis via de novo pathway; (S)-dihydroorotate from bicarbonate: step 2/3. In terms of biological role, catalyzes the condensation of carbamoyl phosphate and aspartate to form carbamoyl aspartate and inorganic phosphate, the committed step in the de novo pyrimidine nucleotide biosynthesis pathway. This Thermococcus kodakarensis (strain ATCC BAA-918 / JCM 12380 / KOD1) (Pyrococcus kodakaraensis (strain KOD1)) protein is Aspartate carbamoyltransferase catalytic subunit.